A 499-amino-acid chain; its full sequence is Glutamate--tRNA ligase (499 aa).

The 'HIGH' region signature appears at 10–20; it reads PSPTGTPHVGM. The short motif at 255–259 is the 'KMSKS' region element; the sequence is KLSKR. Lysine 258 contacts ATP.

This sequence belongs to the class-I aminoacyl-tRNA synthetase family. Glutamate--tRNA ligase type 1 subfamily. Monomer.

Its subcellular location is the cytoplasm. The enzyme catalyses tRNA(Glu) + L-glutamate + ATP = L-glutamyl-tRNA(Glu) + AMP + diphosphate. Catalyzes the attachment of glutamate to tRNA(Glu) in a two-step reaction: glutamate is first activated by ATP to form Glu-AMP and then transferred to the acceptor end of tRNA(Glu). The protein is Glutamate--tRNA ligase of Corynebacterium urealyticum (strain ATCC 43042 / DSM 7109).